The primary structure comprises 287 residues: Syntaxin-11 (287 aa).

The stretch at 41–71 forms a coiled coil; the sequence is LESLYRDIRDIQDENQLLVADVKRLGKQNAR. One can recognise a t-SNARE coiled-coil homology domain in the interval 204–266; that stretch reads LNEIESRHRE…GQAKAQVRKA (63 aa).

It belongs to the syntaxin family. Interacts with the SNARE proteins SNAP-23 and VAMP.

The protein localises to the membrane. It is found in the golgi apparatus. Its subcellular location is the trans-Golgi network membrane. Its function is as follows. SNARE that acts to regulate protein transport between late endosomes and the trans-Golgi network. This chain is Syntaxin-11 (STX11), found in Homo sapiens (Human).